The sequence spans 692 residues: Elongation factor G (692 aa).

The region spanning 8–283 is the tr-type G domain; the sequence is KNTRNIGIMA…AVLDYLPSPV (276 aa). GTP contacts are provided by residues 17 to 24, 81 to 85, and 135 to 138; these read AHIDAGKT, DTPGH, and NKMD.

It belongs to the TRAFAC class translation factor GTPase superfamily. Classic translation factor GTPase family. EF-G/EF-2 subfamily.

Its subcellular location is the cytoplasm. Functionally, catalyzes the GTP-dependent ribosomal translocation step during translation elongation. During this step, the ribosome changes from the pre-translocational (PRE) to the post-translocational (POST) state as the newly formed A-site-bound peptidyl-tRNA and P-site-bound deacylated tRNA move to the P and E sites, respectively. Catalyzes the coordinated movement of the two tRNA molecules, the mRNA and conformational changes in the ribosome. The protein is Elongation factor G of Exiguobacterium sibiricum (strain DSM 17290 / CCUG 55495 / CIP 109462 / JCM 13490 / 255-15).